The sequence spans 194 residues: E3 ubiquitin-protein ligase RNF4 (194 aa).

The segment covering 1–12 has biased composition (basic residues); the sequence is MSTRNPQRKRRG. The tract at residues 1–20 is required for ubiquitination activity; the sequence is MSTRNPQRKRRGGTVNSRQT. Positions 1-39 are disordered; that stretch reads MSTRNPQRKRRGGTVNSRQTQKRTRETTSTPEVSLETEP. Positions 6–65 are mediates interaction with TRPS1; it reads PQRKRRGGTVNSRQTQKRTRETTSTPEVSLETEPIELVETVGDEIVDLTCESLEPVVVDL. The SUMO interaction motif 1; mediates the binding to polysumoylated substrates motif lies at 40-43; it reads IELV. Residues 50–53 carry the SUMO interaction motif 2; mediates the binding to polysumoylated substrates motif; the sequence is IVDL. Residues 61-63 carry the SUMO interaction motif 3; mediates the binding to polysumoylated substrates motif; the sequence is VVV. Residues 71–74 carry the SUMO interaction motif 4; mediates the binding to polysumoylated substrates motif; it reads VVIV. 2 positions are modified to phosphoserine: serine 98 and serine 99. A disordered region spans residues 110–130; the sequence is VYVTTHTPRSTKDDGATGPRP. The Zn(2+) site is built by cysteine 136, cysteine 139, cysteine 158, histidine 160, cysteine 163, cysteine 166, cysteine 177, and cysteine 180. Residues 136–181 form an RING-type zinc finger; it reads CPICMDGYSEIVQNGRLIVSTECGHVFCSQCLRDSLKNANTCPTCR.

In terms of assembly, homodimer (via RING-type zinc finger domain). Interacts with GSC2. Interacts with AR/the androgen receptor and TBP. Interacts with TCF20. Interacts with PATZ1. Interacts with TRPS1; negatively regulates TRPS1 transcriptional repressor activity. Interacts with PML (isoform PML-1, isoform PML-2, isoform PML-3, isoform PML-4, isoform PML-5 and isoform PML-6). Interacts with PRDM1/Blimp-1. Post-translationally, sumoylated; conjugated by one or two SUMO1 moieties. In terms of processing, autoubiquitinated. As to expression, in the embryo, expressed primarily in the developing nervous system with strong expression in the dorsal root ganglia and gonads. Ubiquitously expressed in the adult.

It is found in the cytoplasm. It localises to the nucleus. Its subcellular location is the PML body. The enzyme catalyses S-ubiquitinyl-[E2 ubiquitin-conjugating enzyme]-L-cysteine + [acceptor protein]-L-lysine = [E2 ubiquitin-conjugating enzyme]-L-cysteine + N(6)-ubiquitinyl-[acceptor protein]-L-lysine.. It functions in the pathway protein modification; protein ubiquitination. E3 ubiquitin-protein ligase which binds polysumoylated chains covalently attached to proteins and mediates 'Lys-6'-, 'Lys-11'-, 'Lys-48'- and 'Lys-63'-linked polyubiquitination of those substrates and their subsequent targeting to the proteasome for degradation. Regulates the degradation of several proteins including PML and the transcriptional activator PEA3. Involved in chromosome alignment and spindle assembly, it regulates the kinetochore CENPH-CENPI-CENPK complex by targeting polysumoylated CENPI to proteasomal degradation. Regulates the cellular responses to hypoxia and heat shock through degradation of respectively EPAS1 and PARP1. Alternatively, it may also bind DNA/nucleosomes and have a more direct role in the regulation of transcription for instance enhancing basal transcription and steroid receptor-mediated transcriptional activation. Catalyzes ubiquitination of sumoylated PARP1 in response to PARP1 trapping to chromatin, leading to PARP1 removal from chromatin by VCP/p97. The chain is E3 ubiquitin-protein ligase RNF4 from Mus musculus (Mouse).